Here is a 321-residue protein sequence, read N- to C-terminus: Protein-L-isoaspartate O-methyltransferase (321 aa).

The segment covering 21-31 has biased composition (basic and acidic residues); that stretch reads KPAERQREKRI. The interval 21-65 is disordered; the sequence is KPAERQREKRISSGVNAVSLPTPARTASAERASSTPAPGPGPQRV. Low complexity predominate over residues 41–56; that stretch reads PTPARTASAERASSTP. Residue Ser-153 is part of the active site.

Belongs to the methyltransferase superfamily. L-isoaspartyl/D-aspartyl protein methyltransferase family.

The protein localises to the cytoplasm. The catalysed reaction is [protein]-L-isoaspartate + S-adenosyl-L-methionine = [protein]-L-isoaspartate alpha-methyl ester + S-adenosyl-L-homocysteine. In terms of biological role, catalyzes the methyl esterification of L-isoaspartyl residues in peptides and proteins that result from spontaneous decomposition of normal L-aspartyl and L-asparaginyl residues. It plays a role in the repair and/or degradation of damaged proteins. This Ralstonia nicotianae (strain ATCC BAA-1114 / GMI1000) (Ralstonia solanacearum) protein is Protein-L-isoaspartate O-methyltransferase.